We begin with the raw amino-acid sequence, 872 residues long: C-mannosyltransferase dpy-19 homolog (872 aa).

9 helical membrane passes run 4–24 (PNLY…FLYV), 126–146 (FVWL…TLLS), 149–169 (IFGG…VAKI), 179–199 (FAFP…GRII), 211–231 (IFAM…STFI), 257–277 (VLDY…MSHG), 279–299 (SQLL…ITMV), 326–346 (FLML…ELFN), and 399–419 (VKTM…AMFF). Positions 508-535 (KRLRAQINRNSVKQRKERAQETKEAATD) form a coiled coil. Residues 514–620 (INRNSVKQRK…RSSSRRSSVV (107 aa)) form a disordered region. The segment covering 524–533 (ERAQETKEAA) has biased composition (basic and acidic residues). The segment covering 541–551 (TEEEDKDPEAE) has biased composition (acidic residues). The next 2 membrane-spanning stretches (helical) occupy residues 627–647 (ILNM…LIGL) and 678–698 (NIFW…PGMV).

It belongs to the dpy-19 family.

The protein localises to the membrane. Its function is as follows. Probable C-mannosyltransferase that mediates C-mannosylation of tryptophan residues on target proteins. This Drosophila melanogaster (Fruit fly) protein is C-mannosyltransferase dpy-19 homolog.